A 90-amino-acid chain; its full sequence is Probable Fe(2+)-trafficking protein (90 aa).

Belongs to the Fe(2+)-trafficking protein family.

Functionally, could be a mediator in iron transactions between iron acquisition and iron-requiring processes, such as synthesis and/or repair of Fe-S clusters in biosynthetic enzymes. This chain is Probable Fe(2+)-trafficking protein, found in Idiomarina loihiensis (strain ATCC BAA-735 / DSM 15497 / L2-TR).